Here is a 299-residue protein sequence, read N- to C-terminus: MLDGKQDNGNVDSVDIKQRTNGGGDEGDALGSNSSSQPNRVARMPVDRNAPYYNMNHKHRGMAIIFNHEHFDIHSLKSRTGTNVDSDNLSKVLKTLGFKVTVFPNLKSEEINKFIQQTAEMDHSDADCLLVAVLTHGELGMLYAKDTHYKPDNLWYYFTADKCPTLAGKPKLFFIQACQGDRLDGGITLSRTETDGSPSTSYRIPVHADFLIAFSTVPGYFSWRNTTRGSWFMQALCEELRYAGTERDILTLLTFVCQKVALDFESNAPDSAMMHQQKQVPCITSMLTRLLVFGKKQSH.

Positions 1 to 28 are excised as a propeptide; it reads MLDGKQDNGNVDSVDIKQRTNGGGDEGD. Residues 1–45 are disordered; that stretch reads MLDGKQDNGNVDSVDIKQRTNGGGDEGDALGSNSSSQPNRVARMP. Catalysis depends on residues His-136 and Cys-178. The propeptide occupies 185-195; that stretch reads GGITLSRTETD.

Belongs to the peptidase C14A family. Heterotetramer that consists of two anti-parallel arranged heterodimers, each one formed by a 19/18 kDa (p19/18) and a 12 kDa (p12) subunit. The two subunits are derived from the precursor sequence by an autocatalytic mechanism.

Involved in the activation cascade of caspases responsible for apoptosis execution. Inhibited by the baculovirus anti-apoptotic protein p35. Cleaves p35 and nuclear immunophilin FKBP46. This is Caspase-1 from Spodoptera frugiperda (Fall armyworm).